Here is a 181-residue protein sequence, read N- to C-terminus: Inorganic pyrophosphatase (181 aa).

Substrate-binding residues include K16, R30, and Y42. Positions 52, 57, and 89 each coordinate Mg(2+). Y126 contributes to the substrate binding site.

Belongs to the PPase family. Homohexamer. Mg(2+) is required as a cofactor.

It localises to the cytoplasm. The catalysed reaction is diphosphate + H2O = 2 phosphate + H(+). Its function is as follows. Catalyzes the hydrolysis of inorganic pyrophosphate (PPi) forming two phosphate ions. The chain is Inorganic pyrophosphatase from Malacoplasma penetrans (strain HF-2) (Mycoplasma penetrans).